Here is a 233-residue protein sequence, read N- to C-terminus: N-(5'-phosphoribosyl)anthranilate isomerase (233 aa).

It belongs to the TrpF family.

It carries out the reaction N-(5-phospho-beta-D-ribosyl)anthranilate = 1-(2-carboxyphenylamino)-1-deoxy-D-ribulose 5-phosphate. The protein operates within amino-acid biosynthesis; L-tryptophan biosynthesis; L-tryptophan from chorismate: step 3/5. This is N-(5'-phosphoribosyl)anthranilate isomerase from Synechococcus sp. (strain JA-2-3B'a(2-13)) (Cyanobacteria bacterium Yellowstone B-Prime).